The chain runs to 410 residues: Putative F-box/kelch-repeat protein At1g15680 (410 aa).

Residues 13–58 (CKRRIELPEELLAEIVARLPFISITRFKSVCKGWRSLIESTYFRHL) form the F-box domain. Kelch repeat units follow at residues 177–227 (VVCM…SLKK) and 274–327 (AYTT…YFPV).

The chain is Putative F-box/kelch-repeat protein At1g15680 from Arabidopsis thaliana (Mouse-ear cress).